The sequence spans 829 residues: E3 ubiquitin-protein ligase Jade-2 (829 aa).

The tract at residues 1–52 (MEEKRRKYSISSDNSDTTDGHVTSTSASRCSKLPSSTKSGWPRQNEKKPSEV) is disordered. A phosphoserine mark is found at serine 9 and serine 15. Over residues 9-39 (SISSDNSDTTDGHVTSTSASRCSKLPSSTKS) the composition is skewed to polar residues. Residues lysine 32 and lysine 38 each carry the N6-acetyllysine modification. Phosphoserine is present on serine 117. The PHD-type 1 zinc finger occupies 199–249 (DVVCDVCRSPEGEDGNEMVFCDKCNVCVHQACYGILKVPTGSWLCRTCALG). The segment at 251–285 (QPKCLLCPKRGGALKPTRSGTKWVHVSCALWIPEV) adopts a C2HC pre-PHD-type zinc-finger fold. N6-acetyllysine is present on lysine 298. The PHD-type 2 zinc finger occupies 309-365 (LSCSLCKECTGTCIQCSMPSCITAFHVTCAFDRGLEMRTILADNDEVKFKSLCQEHS). Disordered regions lie at residues 362-383 (QEHS…PSQA), 517-555 (REPS…AGPE), and 622-817 (SFMR…REAG). Residues 522-535 (RRSKGKKNDSKRKG) are compositionally biased toward basic residues. Positions 536–552 (REGPKGSSPEKKEKVKA) are enriched in basic and acidic residues. Residues 637–650 (KARGRTRLPAKKKP) are compositionally biased toward basic residues. Residues 776-786 (ERPKVSLHFDT) show a composition bias toward basic and acidic residues. Residues 792 to 806 (FSDEEMSDSEVEAED) are compositionally biased toward acidic residues.

It belongs to the JADE family. In terms of assembly, component of the HBO1 complex composed at least of ING4 or ING5, MYST2/HBO1, MEAF6, and one of JADE1, JADE2 and JADE3. Interacts (via C-terminus) with KDM1A (via AOD/Tower domain).

It catalyses the reaction S-ubiquitinyl-[E2 ubiquitin-conjugating enzyme]-L-cysteine + [acceptor protein]-L-lysine = [E2 ubiquitin-conjugating enzyme]-L-cysteine + N(6)-ubiquitinyl-[acceptor protein]-L-lysine.. It participates in protein modification; protein ubiquitination. In terms of biological role, scaffold subunit of some HBO1 complexes, which have a histone H4 acetyltransferase activity. Acts as a E3 ubiquitin-protein ligase mediating the ubiquitination and subsequent proteasomal degradation of target protein histone demethylase KDM1A. Also acts as a ubiquitin ligase E3 toward itself. Positive regulator of neurogenesis. The sequence is that of E3 ubiquitin-protein ligase Jade-2 (Jade2) from Mus musculus (Mouse).